A 241-amino-acid polypeptide reads, in one-letter code: 4-hydroxy-tetrahydrodipicolinate reductase (241 aa).

Residues glycine 7–methionine 12, glycine 74–threonine 76, and serine 98–methionine 101 each bind NAD(+). Histidine 131 functions as the Proton donor/acceptor in the catalytic mechanism. Histidine 132 contributes to the (S)-2,3,4,5-tetrahydrodipicolinate binding site. The Proton donor role is filled by lysine 135. A (S)-2,3,4,5-tetrahydrodipicolinate-binding site is contributed by glycine 141–serine 142.

The protein belongs to the DapB family.

It localises to the cytoplasm. It carries out the reaction (S)-2,3,4,5-tetrahydrodipicolinate + NAD(+) + H2O = (2S,4S)-4-hydroxy-2,3,4,5-tetrahydrodipicolinate + NADH + H(+). It catalyses the reaction (S)-2,3,4,5-tetrahydrodipicolinate + NADP(+) + H2O = (2S,4S)-4-hydroxy-2,3,4,5-tetrahydrodipicolinate + NADPH + H(+). It participates in amino-acid biosynthesis; L-lysine biosynthesis via DAP pathway; (S)-tetrahydrodipicolinate from L-aspartate: step 4/4. In terms of biological role, catalyzes the conversion of 4-hydroxy-tetrahydrodipicolinate (HTPA) to tetrahydrodipicolinate. In Alkaliphilus oremlandii (strain OhILAs) (Clostridium oremlandii (strain OhILAs)), this protein is 4-hydroxy-tetrahydrodipicolinate reductase.